The chain runs to 72 residues: NAD(P)H-quinone oxidoreductase subunit O (72 aa).

The protein belongs to the complex I NdhO subunit family. In terms of assembly, NDH-1 can be composed of about 15 different subunits; different subcomplexes with different compositions have been identified which probably have different functions.

Its subcellular location is the cellular thylakoid membrane. It carries out the reaction a plastoquinone + NADH + (n+1) H(+)(in) = a plastoquinol + NAD(+) + n H(+)(out). It catalyses the reaction a plastoquinone + NADPH + (n+1) H(+)(in) = a plastoquinol + NADP(+) + n H(+)(out). Its function is as follows. NDH-1 shuttles electrons from an unknown electron donor, via FMN and iron-sulfur (Fe-S) centers, to quinones in the respiratory and/or the photosynthetic chain. The immediate electron acceptor for the enzyme in this species is believed to be plastoquinone. Couples the redox reaction to proton translocation, and thus conserves the redox energy in a proton gradient. Cyanobacterial NDH-1 also plays a role in inorganic carbon-concentration. The sequence is that of NAD(P)H-quinone oxidoreductase subunit O from Gloeothece citriformis (strain PCC 7424) (Cyanothece sp. (strain PCC 7424)).